Here is a 43-residue protein sequence, read N- to C-terminus: Histone H3 (43 aa).

The nucleosome is a histone octamer containing two molecules each of H2A, H2B, H3 and H4 assembled in one H3-H4 heterotetramer and two H2A-H2B heterodimers. The octamer wraps approximately 147 bp of DNA.

It localises to the nucleus. Its subcellular location is the chromosome. Functionally, core component of nucleosome. Nucleosomes wrap and compact DNA into chromatin, limiting DNA accessibility to the cellular machineries which require DNA as a template. Histones thereby play a central role in transcription regulation, DNA repair, DNA replication and chromosomal stability. DNA accessibility is regulated via a complex set of post-translational modifications of histones, also called histone code, and nucleosome remodeling. The chain is Histone H3 from Penaeus vannamei (Whiteleg shrimp).